We begin with the raw amino-acid sequence, 181 residues long: Inner membrane-spanning protein YciB (181 aa).

The next 5 membrane-spanning stretches (helical) occupy residues 22–42, 50–70, 72–92, 118–138, and 148–168; these read IYTA…ILYF, MHLV…AFHD, AFIK…LAVS, VTWY…YVAF, and FKVF…VFYI.

The protein belongs to the YciB family.

It localises to the cell inner membrane. In terms of biological role, plays a role in cell envelope biogenesis, maintenance of cell envelope integrity and membrane homeostasis. The protein is Inner membrane-spanning protein YciB of Shewanella denitrificans (strain OS217 / ATCC BAA-1090 / DSM 15013).